The chain runs to 337 residues: tRNA N6-adenosine threonylcarbamoyltransferase (337 aa).

Fe cation contacts are provided by His-111 and His-115. Substrate is bound by residues 134 to 138 (LVSGG), Asp-167, Gly-180, and Asn-272. A Fe cation-binding site is contributed by Asp-300.

It belongs to the KAE1 / TsaD family. Requires Fe(2+) as cofactor.

The protein localises to the cytoplasm. It carries out the reaction L-threonylcarbamoyladenylate + adenosine(37) in tRNA = N(6)-L-threonylcarbamoyladenosine(37) in tRNA + AMP + H(+). Its function is as follows. Required for the formation of a threonylcarbamoyl group on adenosine at position 37 (t(6)A37) in tRNAs that read codons beginning with adenine. Is involved in the transfer of the threonylcarbamoyl moiety of threonylcarbamoyl-AMP (TC-AMP) to the N6 group of A37, together with TsaE and TsaB. TsaD likely plays a direct catalytic role in this reaction. The chain is tRNA N6-adenosine threonylcarbamoyltransferase from Enterobacter sp. (strain 638).